A 337-amino-acid polypeptide reads, in one-letter code: Ketol-acid reductoisomerase (NADP(+)) (337 aa).

The KARI N-terminal Rossmann domain maps to 3–183 (VEMFYDDDAD…GGARAGVIKT (181 aa)). NADP(+) is bound by residues 26 to 29 (YGSQ), lysine 49, serine 52, serine 54, and 84 to 87 (DTAQ). Histidine 109 is an active-site residue. Glycine 135 is an NADP(+) binding site. The KARI C-terminal knotted domain occupies 184 to 329 (TFKEETETDL…KKLRDLMSWV (146 aa)). 4 residues coordinate Mg(2+): aspartate 192, glutamate 196, glutamate 228, and glutamate 232. Serine 253 contributes to the substrate binding site.

It belongs to the ketol-acid reductoisomerase family. Mg(2+) serves as cofactor.

It carries out the reaction (2R)-2,3-dihydroxy-3-methylbutanoate + NADP(+) = (2S)-2-acetolactate + NADPH + H(+). It catalyses the reaction (2R,3R)-2,3-dihydroxy-3-methylpentanoate + NADP(+) = (S)-2-ethyl-2-hydroxy-3-oxobutanoate + NADPH + H(+). Its pathway is amino-acid biosynthesis; L-isoleucine biosynthesis; L-isoleucine from 2-oxobutanoate: step 2/4. It functions in the pathway amino-acid biosynthesis; L-valine biosynthesis; L-valine from pyruvate: step 2/4. Its function is as follows. Involved in the biosynthesis of branched-chain amino acids (BCAA). Catalyzes an alkyl-migration followed by a ketol-acid reduction of (S)-2-acetolactate (S2AL) to yield (R)-2,3-dihydroxy-isovalerate. In the isomerase reaction, S2AL is rearranged via a Mg-dependent methyl migration to produce 3-hydroxy-3-methyl-2-ketobutyrate (HMKB). In the reductase reaction, this 2-ketoacid undergoes a metal-dependent reduction by NADPH to yield (R)-2,3-dihydroxy-isovalerate. The sequence is that of Ketol-acid reductoisomerase (NADP(+)) from Rhodococcus opacus (strain B4).